The primary structure comprises 333 residues: Ketol-acid reductoisomerase (NADP(+)) (333 aa).

Positions 2–182 (AKIFYDSDCN…GASRAGIILT (181 aa)) constitute a KARI N-terminal Rossmann domain. Residues 25 to 28 (FGSQ), Ser-51, Ser-53, and 83 to 86 (DEKQ) contribute to the NADP(+) site. His-108 is an active-site residue. Gly-134 lines the NADP(+) pocket. A KARI C-terminal knotted domain is found at 183–328 (TFKEETETDL…KELRKMMPWI (146 aa)). Mg(2+) is bound by residues Asp-191, Glu-195, Glu-227, and Glu-231. Ser-252 is a binding site for substrate.

It belongs to the ketol-acid reductoisomerase family. Requires Mg(2+) as cofactor.

It carries out the reaction (2R)-2,3-dihydroxy-3-methylbutanoate + NADP(+) = (2S)-2-acetolactate + NADPH + H(+). The catalysed reaction is (2R,3R)-2,3-dihydroxy-3-methylpentanoate + NADP(+) = (S)-2-ethyl-2-hydroxy-3-oxobutanoate + NADPH + H(+). It participates in amino-acid biosynthesis; L-isoleucine biosynthesis; L-isoleucine from 2-oxobutanoate: step 2/4. Its pathway is amino-acid biosynthesis; L-valine biosynthesis; L-valine from pyruvate: step 2/4. Its function is as follows. Involved in the biosynthesis of branched-chain amino acids (BCAA). Catalyzes an alkyl-migration followed by a ketol-acid reduction of (S)-2-acetolactate (S2AL) to yield (R)-2,3-dihydroxy-isovalerate. In the isomerase reaction, S2AL is rearranged via a Mg-dependent methyl migration to produce 3-hydroxy-3-methyl-2-ketobutyrate (HMKB). In the reductase reaction, this 2-ketoacid undergoes a metal-dependent reduction by NADPH to yield (R)-2,3-dihydroxy-isovalerate. The polypeptide is Ketol-acid reductoisomerase (NADP(+)) (Caldicellulosiruptor bescii (strain ATCC BAA-1888 / DSM 6725 / KCTC 15123 / Z-1320) (Anaerocellum thermophilum)).